The following is a 1383-amino-acid chain: DNA-directed RNA polymerase subunit beta (1383 aa).

This sequence belongs to the RNA polymerase beta chain family. The RNAP catalytic core consists of 2 alpha, 1 beta, 1 beta' and 1 omega subunit. When a sigma factor is associated with the core the holoenzyme is formed, which can initiate transcription.

The catalysed reaction is RNA(n) + a ribonucleoside 5'-triphosphate = RNA(n+1) + diphosphate. In terms of biological role, DNA-dependent RNA polymerase catalyzes the transcription of DNA into RNA using the four ribonucleoside triphosphates as substrates. This chain is DNA-directed RNA polymerase subunit beta, found in Xanthomonas oryzae pv. oryzae (strain MAFF 311018).